The primary structure comprises 161 residues: Periplasmic chaperone Spy (161 aa).

A signal peptide spans 1 to 23; the sequence is MRKLTALFVASTLALGAANLAHA. The interval 140–161 is disordered; it reads ANFEKRLTERPAAKGKMPATAE. The span at 142 to 151 shows a compositional bias: basic and acidic residues; sequence FEKRLTERPA.

This sequence belongs to the CpxP/Spy family. In terms of assembly, homodimer.

Its subcellular location is the periplasm. Its function is as follows. An ATP-independent periplasmic chaperone, decreases protein aggregation and helps protein refolding. Binds substrate over a large region of its convex inner surface. Substrate protein folds while it is bound to chaperone. Increasing Spy flexibility increases its substrate affinity and overall chaperone activity (shown for 3 different substrates). Protects proteins in vitro against tannin inactivation; tannins have antimicrobial activity. Overexpression enhances the stability of otherwise unstable periplasmic proteins. This is Periplasmic chaperone Spy from Escherichia coli (strain K12).